We begin with the raw amino-acid sequence, 437 residues long: Ribosomal protein uS12 methylthiotransferase RimO (437 aa).

Positions 5 to 116 constitute an MTTase N-terminal domain; the sequence is PTIAISHLGC…IVEIVERVET (112 aa). 6 residues coordinate [4Fe-4S] cluster: Cys-14, Cys-50, Cys-79, Cys-154, Cys-158, and Cys-161. Residues 140 to 369 enclose the Radical SAM core domain; the sequence is TTSEGVAYLR…MLTQQPISER (230 aa). The TRAM domain maps to 372-437; sequence QAYIGQTVDV…DTYDLYGEIV (66 aa).

The protein belongs to the methylthiotransferase family. RimO subfamily. Requires [4Fe-4S] cluster as cofactor.

The protein resides in the cytoplasm. The enzyme catalyses L-aspartate(89)-[ribosomal protein uS12]-hydrogen + (sulfur carrier)-SH + AH2 + 2 S-adenosyl-L-methionine = 3-methylsulfanyl-L-aspartate(89)-[ribosomal protein uS12]-hydrogen + (sulfur carrier)-H + 5'-deoxyadenosine + L-methionine + A + S-adenosyl-L-homocysteine + 2 H(+). Catalyzes the methylthiolation of an aspartic acid residue of ribosomal protein uS12. The polypeptide is Ribosomal protein uS12 methylthiotransferase RimO (Microcystis aeruginosa (strain NIES-843 / IAM M-2473)).